Consider the following 162-residue polypeptide: Probable E3 ubiquitin-protein ligase XERICO (162 aa).

A helical membrane pass occupies residues 12 to 28 (GMLCVILVNTALSISIV). The RING-type; atypical zinc finger occupies 103-145 (CSVCLSKFQGDSEINKLKCGHLFHKTCLEKWIDYWNITCPLCR).

As to quaternary structure, interacts with UBC8 and TULP9. In terms of tissue distribution, ubiquitous. Higher expression in actively growing tissues.

It localises to the membrane. It catalyses the reaction S-ubiquitinyl-[E2 ubiquitin-conjugating enzyme]-L-cysteine + [acceptor protein]-L-lysine = [E2 ubiquitin-conjugating enzyme]-L-cysteine + N(6)-ubiquitinyl-[acceptor protein]-L-lysine.. It functions in the pathway protein modification; protein ubiquitination. Functionally, function on abscisic acid homeostasis at post-translational level, probably through ubiquitin/proteasome-dependent substrate-specific degradation. This Arabidopsis thaliana (Mouse-ear cress) protein is Probable E3 ubiquitin-protein ligase XERICO (XERICO).